Consider the following 213-residue polypeptide: uncharacterized protein (213 aa).

Residues Gly53, Glu74, and Asp96 each coordinate S-adenosyl-L-methionine.

Belongs to the methyltransferase superfamily. YrrT family.

Could be a S-adenosyl-L-methionine-dependent methyltransferase. This is an uncharacterized protein from Oceanobacillus iheyensis (strain DSM 14371 / CIP 107618 / JCM 11309 / KCTC 3954 / HTE831).